A 332-amino-acid chain; its full sequence is UDP-galactose/UDP-glucose transporter 1 (332 aa).

Helical transmembrane passes span 11–31 (ILLL…QGVL), 49–69 (HLAF…YIMI), 80–100 (APWW…AMGI), 112–132 (VLAK…VYGI), 135–155 (TFPE…FALL), 206–226 (IMLG…FGLP), 252–272 (ICGA…GSLA), and 301–317 (WGCV…QIYL). Positions 327 to 332 (KKKQKS) match the Di-lysine motif motif.

Belongs to the nucleotide-sugar transporter family. UDP-galactose:UMP antiporter (TC 2.A.7.11) subfamily.

It is found in the endoplasmic reticulum membrane. Essential sugar transporter required for the transport of UDP-galactose and UDP-glucose from the cytoplasm into the Golgi and the endoplasmic reticulum, to ensure quality control of protein folding. Essential for pollen development and involved in embryo sac progress. The sequence is that of UDP-galactose/UDP-glucose transporter 1 from Arabidopsis thaliana (Mouse-ear cress).